Consider the following 348-residue polypeptide: Bombesin receptor-activated protein C6orf89 homolog (348 aa).

Residues 1–58 (MDLAANEISIYDKLSETVDLVRQTGHQCGMSEKAIEKFIRQLLEKNEPQRGPPQYPLL) lie on the Cytoplasmic side of the membrane. A helical transmembrane segment spans residues 59–79 (IAVYKVLLTLGLILFTAYFVI). Residues 80 to 348 (QPFSSLAPEP…ICDGTTLSDL (269 aa)) lie on the Extracellular side of the membrane.

In terms of assembly, homodimer. Interacts with BRS3. Interacts (via N-terminus) with SIN3B. Glycosylated.

It is found in the golgi apparatus membrane. It localises to the cytoplasm. Its function is as follows. Exhibits histone deacetylase (HDAC) enhancer properties. May play a role in cell cycle progression and wound repair of bronchial epithelial cells. In Mus musculus (Mouse), this protein is Bombesin receptor-activated protein C6orf89 homolog.